Reading from the N-terminus, the 249-residue chain is Pyridoxamine 5'-phosphate oxidase family protein ustO (249 aa).

21–24 (LFFV) contributes to the substrate binding site. FMN-binding positions include 76–81 (ATVMFC), 91–92 (RL), Arg105, and 163–164 (RL). 215 to 217 (ASY) lines the substrate pocket. A helical membrane pass occupies residues 227–247 (TGMALMFLVMVVAQWVGYVLY).

The protein belongs to the pyridoxamine 5'-phosphate oxidase family. FMN serves as cofactor.

It is found in the membrane. Its pathway is mycotoxin biosynthesis. Functionally, pyridoxamine 5'-phosphate oxidase family protein; part of the gene cluster that mediates the biosynthesis of the secondary metabolite ustiloxin B, an antimitotic tetrapeptide. First, ustA is processed by the subtilisin-like endoprotease Kex2 that is outside the ustiloxin B gene cluster, at the C-terminal side of Arg-Lys, after transfer to Golgi apparatus through the endoplasmic reticulum (ER). Cleavage by KEX2 generates 16 peptides YAIG-I to YAIG-XVI. To process the precursor peptide further, at least two peptidases are necessary to cleave the N-terminal and C-terminal sides of the Tyr-Ala-Ile-Gly core peptide which serves as backbone for the synthesis of ustiloxin B, through cyclization and modification of the tyrosine with a non-protein coding amino acid, norvaline. One of the two peptidases must be the serine peptidase ustP; and the other pepdidase is probably ustH. Macrocyclization of the core peptide derived from ustA requires the tyrosinase ustQ, as well as the homologous oxidases ustYa and ustYb, and leads to the production of the first cyclization product N-desmethylustiloxin F. For the formation of N-desmethylustiloxin F, three oxidation steps are required, hydroxylation at the benzylic position, hydroxylation at either the aromatic ring of Tyr or beta-position of Ile, and oxidative cyclization. UstQ may catalyze the oxidation of a phenol moiety, whereas the ustYa and ustYb are most likely responsible for the remaining two-step oxidations. N-desmethylustiloxin F is then methylated by ustM to yield ustiloxin F which in turn substrate of the cytochrome P450 monooxygenase ustC which catalyzes the formation of S-deoxyustiloxin H. The flavoprotein monooxygenases ustF1 and ustF2 then participate in the modification of the side chain of S-deoxyustiloxin H, leading to the synthesis of an oxime intermediate, via ustiloxin H. Finally, carboxylative dehydration performed by the cysteine desulfurase-like protein ustD yields ustiloxin B. This Aspergillus flavus (strain ATCC 200026 / FGSC A1120 / IAM 13836 / NRRL 3357 / JCM 12722 / SRRC 167) protein is Pyridoxamine 5'-phosphate oxidase family protein ustO.